Consider the following 345-residue polypeptide: Biotin synthase (345 aa).

Residues 38-256 (RQVQVSTLLS…IAVARIMMPA (219 aa)) enclose the Radical SAM core domain. [4Fe-4S] cluster is bound by residues Cys-53, Cys-57, and Cys-60. The [2Fe-2S] cluster site is built by Cys-97, Cys-128, Cys-188, and Arg-260.

It belongs to the radical SAM superfamily. Biotin synthase family. As to quaternary structure, homodimer. [4Fe-4S] cluster serves as cofactor. [2Fe-2S] cluster is required as a cofactor.

The catalysed reaction is (4R,5S)-dethiobiotin + (sulfur carrier)-SH + 2 reduced [2Fe-2S]-[ferredoxin] + 2 S-adenosyl-L-methionine = (sulfur carrier)-H + biotin + 2 5'-deoxyadenosine + 2 L-methionine + 2 oxidized [2Fe-2S]-[ferredoxin]. Its pathway is cofactor biosynthesis; biotin biosynthesis; biotin from 7,8-diaminononanoate: step 2/2. Functionally, catalyzes the conversion of dethiobiotin (DTB) to biotin by the insertion of a sulfur atom into dethiobiotin via a radical-based mechanism. This chain is Biotin synthase, found in Serratia proteamaculans (strain 568).